The following is a 239-amino-acid chain: NAD-dependent protein deacylase (239 aa).

In terms of domain architecture, Deacetylase sirtuin-type spans 1-234; the sequence is MENLNIVTLT…KKVYDYLREK (234 aa). NAD(+) is bound by residues 11–30 and 89–92; these read GAGI…DGLW and QNVD. Residue His107 is the Proton acceptor of the active site. Positions 115, 118, 136, and 139 each coordinate Zn(2+). NAD(+)-binding positions include 176–178, 202–204, and Ala220; these read GTS and NPE.

This sequence belongs to the sirtuin family. Class III subfamily. Requires Zn(2+) as cofactor.

It localises to the cytoplasm. The enzyme catalyses N(6)-acetyl-L-lysyl-[protein] + NAD(+) + H2O = 2''-O-acetyl-ADP-D-ribose + nicotinamide + L-lysyl-[protein]. Functionally, NAD-dependent protein deacetylase which modulates the activities of several proteins which are inactive in their acetylated form. This chain is NAD-dependent protein deacylase, found in Aquifex aeolicus (strain VF5).